Here is a 241-residue protein sequence, read N- to C-terminus: Uridylate kinase (241 aa).

Residue 12 to 15 (KISG) coordinates ATP. The tract at residues 20-25 (GDKGNG) is involved in allosteric activation by GTP. UMP is bound at residue Gly-54. ATP is bound by residues Gly-55 and Arg-59. UMP contacts are provided by residues Asp-74 and 135–142 (TGNPYFST). ATP contacts are provided by Asn-163, Tyr-169, and Asp-172.

The protein belongs to the UMP kinase family. As to quaternary structure, homohexamer.

The protein resides in the cytoplasm. It catalyses the reaction UMP + ATP = UDP + ADP. The protein operates within pyrimidine metabolism; CTP biosynthesis via de novo pathway; UDP from UMP (UMPK route): step 1/1. With respect to regulation, allosterically activated by GTP. Inhibited by UTP. Functionally, catalyzes the reversible phosphorylation of UMP to UDP. This is Uridylate kinase from Lactobacillus acidophilus (strain ATCC 700396 / NCK56 / N2 / NCFM).